Reading from the N-terminus, the 424-residue chain is L-threonine:uridine-5'-aldehyde transaldolase (424 aa).

At Lys235 the chain carries N6-(pyridoxal phosphate)lysine.

This sequence belongs to the SHMT family. Requires pyridoxal 5'-phosphate as cofactor.

The catalysed reaction is uridine-5'-aldehyde + L-threonine = (5'S,6'S)-C-glycyluridine + acetaldehyde. The protein operates within antibiotic biosynthesis. Its function is as follows. Transaldolase involved in the biosynthesis of the lipopeptidyl nucleoside antibiotic A-90289. Catalyzes the condensation of L-threonine and uridine-5'-aldehyde to form 5'-C-glycyluridine (GlyU). Forms (5'S,6'S)-GlyU. Has no activity with alternative amino acids, such as glycine or serine. The chain is L-threonine:uridine-5'-aldehyde transaldolase from Streptomyces sp.